A 359-amino-acid chain; its full sequence is MSFESTFEGLCEKFRILKQQLSAPETLGTQAFVVASREYSDLLPIMSLIEKYKSTQKEIAELEELVNSASTDPELRSLAKDESHIKQKLLPKLRHELQLSLLPKDRDDSRNAILEIRAGTGGEEAALFVGNLYRMYLKYAERKNWKVETINISTTGIGGYKEASFSIGGKDVFARLKFESGVHRVQRVPETESSGRLHTSAATVAVLPEVEEVDLKIDEKDLRIDVYRSSGPGGQSVNTTDSAVRITHIPTGIVVIQQDEKSQHKNKSKALKVLRARLYNLEKQKREEEISKMRKSQIGSGDRSERIRTYNFLQSRITDHRINLTSYRLDYVMKEGDLDEFIDALVADDQANKLKQITH.

Residue glutamine 235 is modified to N5-methylglutamine.

Belongs to the prokaryotic/mitochondrial release factor family. Methylated by PrmC. Methylation increases the termination efficiency of RF1.

Its subcellular location is the cytoplasm. Its function is as follows. Peptide chain release factor 1 directs the termination of translation in response to the peptide chain termination codons UAG and UAA. The sequence is that of Peptide chain release factor 1 from Anaplasma phagocytophilum (strain HZ).